A 342-amino-acid chain; its full sequence is Serpentine receptor class r-10 (342 aa).

The Extracellular portion of the chain corresponds to 1–11 (MTGELWLTLVD). Residues 12–32 (TADIVGFSMTFCVNIVLLFLL) traverse the membrane as a helical segment. At 33 to 38 (KNRGKN) the chain is on the cytoplasmic side. The helical transmembrane segment at 39–59 (LGTYKHLMAFFSVFSIFYAII) threads the bilayer. At 60-92 (ESILRPIMHIENATFFLISRKRFNYSTRLGKIN) the chain is on the extracellular side. N-linked (GlcNAc...) asparagine glycans are attached at residues Asn-71 and Asn-83. A helical membrane pass occupies residues 93–113 (SAFYCACFATSFVVSGVHFVY). The Cytoplasmic segment spans residues 114-131 (RFFASCKPHLLRSFNMPY). Residues 132–152 (LLLWPLGCSIPVMMWASVSYF) traverse the membrane as a helical segment. At 153 to 202 (LYPDTAFTEAAVTNVLNTHYHSIKKDNVSYIAYVYYQYDENGVRYVYLKN) the chain is on the extracellular side. Residue Asn-179 is glycosylated (N-linked (GlcNAc...) asparagine). Residues 203–223 (LLGCFVHYFVMSATFVVMFIC) form a helical membrane-spanning segment. Over 224-257 (GYLTWKTMRKHKTASDRTRQLQKQLFKALVLQTL) the chain is Cytoplasmic. A helical transmembrane segment spans residues 258-278 (IPTIFMYAPTGVMFIAPFFSI). The Extracellular portion of the chain corresponds to 279–285 (NLNANAN). The chain crosses the membrane as a helical span at residues 286–306 (FIVFCSFLYPGLDPLILILII). Topologically, residues 307-342 (RDFRQTVFKFFCLRKKNSVDESRSTTRANMSQVATH) are cytoplasmic.

It belongs to the nematode receptor-like protein str family. Interacts with odr-4.

The protein localises to the cell projection. Its subcellular location is the cilium membrane. An odorant receptor which affects chemotaxis to the volatile odorant diacetyl. Specifies AWA neuronal cell fate via the odr-7 pathway. The polypeptide is Serpentine receptor class r-10 (Caenorhabditis briggsae).